The following is a 219-amino-acid chain: GTP-binding protein Rit1 (219 aa).

GTP contacts are provided by residues 28 to 35 (GAGGVGKS), 75 to 79 (DTAGQ), and 134 to 137 (NKSD).

This sequence belongs to the small GTPase superfamily. Ras family. In terms of assembly, interacts with AFDN, the C-terminal domain of RALGDS and RLF, but not with RIN1 and PIK3CA. RLF binds exclusively to the active GTP-bound form. Strongly interacts with BRAF, but only weakly with RAF1. BARF and RAF1 association is dependent upon the GTP-bound state. Interacts with RGL3. In terms of tissue distribution, expressed in many tissues.

Its subcellular location is the cell membrane. The catalysed reaction is GTP + H2O = GDP + phosphate + H(+). Alternates between an inactive form bound to GDP and an active form bound to GTP. In terms of biological role, plays a crucial role in coupling NGF stimulation to the activation of both EPHB2 and MAPK14 signaling pathways and in NGF-dependent neuronal differentiation. Involved in ELK1 transactivation through the Ras-MAPK signaling cascade that mediates a wide variety of cellular functions, including cell proliferation, survival, and differentiation. The chain is GTP-binding protein Rit1 (Rit1) from Mus musculus (Mouse).